Reading from the N-terminus, the 1881-residue chain is Kinesin-like protein KIF26A (1881 aa).

Disordered regions lie at residues 20–66 (PARE…AGGG), 145–193 (PASH…PPGP), and 309–330 (ASKR…STYP). At S30 the chain carries Phosphoserine. The Kinesin motor domain maps to 364 to 718 (KVKVMLRIWP…VQLAARIHRL (355 aa)). 462–469 (GHMSLGKS) contributes to the ATP binding site. Disordered stretches follow at residues 718 to 778 (LRRK…SSEQ), 794 to 827 (SDRE…RDAD), 846 to 982 (GSEA…QAAL), 1078 to 1104 (YTSQ…GSPA), 1118 to 1266 (LSES…PRLP), 1328 to 1425 (SGSL…PYRP), 1442 to 1633 (SKVR…SGEL), and 1652 to 1698 (YESM…TGLQ). Positions 742–751 (RRPPHLRPFH) are enriched in basic residues. Residues 818–827 (RPSEGPRDAD) are compositionally biased toward basic and acidic residues. Residues 905–915 (SDPSKTGTQSE) show a composition bias toward polar residues. The span at 940-950 (LPSPAPPPPRQ) shows a compositional bias: pro residues. Low complexity predominate over residues 1084–1095 (EGPGDPGEFPEG). Residues 1151-1162 (EESKVRSSECGR) show a composition bias toward basic and acidic residues. S1257 carries the post-translational modification Phosphoserine. Over residues 1328-1353 (SGSLKTTSGSKKSVSPKGAFFPRPSG) the composition is skewed to low complexity. A compositionally biased stretch (polar residues) spans 1366–1378 (LEQSTALTPTQAL). Basic and acidic residues predominate over residues 1390–1399 (RGEEEARPSG). Polar residues predominate over residues 1400–1412 (RSDSSVPKATSSL). Low complexity-rich tracts occupy residues 1477–1489 (PAKG…PPAG), 1524–1537 (PGPR…PGIG), and 1575–1587 (WGST…NDSG). Polar residues predominate over residues 1616-1629 (RYSSGHGSDNSSVL). S1654 is modified (phosphoserine). The span at 1664 to 1675 (SASSAPDSMSES) shows a compositional bias: low complexity. The span at 1685–1698 (RSLKSPKKRATGLQ) shows a compositional bias: basic residues. Positions 1780–1812 (LRLAERRQQRLQEVQAKRDHLCEELAETQGRLM) form a coiled coil.

This sequence belongs to the TRAFAC class myosin-kinesin ATPase superfamily. Kinesin family. KIF26 subfamily. As to quaternary structure, interacts with GRB2 (via SH2 domain). Expressed in several neuronal populations.

The protein resides in the cytoplasm. It is found in the cytoskeleton. Its function is as follows. Atypical kinesin that plays a key role in enteric neuron development. Acts by repressing a cell growth signaling pathway in the enteric nervous system development, possibly via its interaction with GRB2 that prevents GRB2-binding to SHC, thereby attenating the GDNF-Ret signaling. Binds to microtubules but lacks microtubule-based motility due to the absence of ATPase activity. Plays a critical role in cerebral cortical development. It probably acts as a microtubule stabilizer that regulates neurite growth and radial migration of cortical excitatory neurons. The sequence is that of Kinesin-like protein KIF26A (Kif26a) from Mus musculus (Mouse).